The following is a 561-amino-acid chain: Cytosolic purine 5'-nucleotidase (561 aa).

The Nucleophile role is filled by D52. D52 and D54 together coordinate GMP. The IMP site is built by D52 and D54. Mg(2+) is bound by residues D52 and D54. D54 functions as the Proton donor in the catalytic mechanism. R144 serves as a coordination point for (2R)-2,3-bisphosphoglycerate. R144 and N154 together coordinate ATP. Residues R144 and N154 each coordinate dATP. An adenosine-binding site is contributed by N154. N154 serves as a coordination point for P(1),P(4)-bis(5'-adenosyl) tetraphosphate. Positions 202, 206, 215, 249, and 250 each coordinate GMP. IMP-binding residues include R202, D206, K215, T249, N250, S251, and K292. Residue K292 coordinates GMP. Residue D351 coordinates Mg(2+). K362 is a binding site for (2R)-2,3-bisphosphoglycerate. K362 contacts P(1),P(4)-bis(5'-adenosyl) tetraphosphate. S418 bears the Phosphoserine mark. Adenosine contacts are provided by M436 and Q453. ATP is bound by residues Q453 and R456. DATP contacts are provided by Q453 and R456. Q453 contributes to the P(1),P(4)-bis(5'-adenosyl) tetraphosphate binding site. A (2R)-2,3-bisphosphoglycerate-binding site is contributed by Y457. Y457 contacts P(1),P(4)-bis(5'-adenosyl) tetraphosphate. Residues S502, S511, and S527 each carry the phosphoserine modification. Residues 538–561 (PLAPQEITHCHDEDDDEEEEEEEE) are disordered. The required for tetramer assembly stretch occupies residues 548 to 561 (HDEDDDEEEEEEEE). The span at 550-561 (EDDDEEEEEEEE) shows a compositional bias: acidic residues.

This sequence belongs to the 5'(3')-deoxyribonucleotidase family. As to quaternary structure, homotetramer. It depends on Mg(2+) as a cofactor. Widely expressed.

The protein localises to the cytoplasm. It localises to the cytosol. The enzyme catalyses a ribonucleoside 5'-phosphate + H2O = a ribonucleoside + phosphate. The catalysed reaction is a 2'-deoxyribonucleoside + a ribonucleoside 5'-phosphate = a ribonucleoside + a 2'-deoxyribonucleoside 5'-phosphate. It carries out the reaction IMP + H2O = inosine + phosphate. It catalyses the reaction GMP + H2O = guanosine + phosphate. The enzyme catalyses dIMP + H2O = 2'-deoxyinosine + phosphate. The catalysed reaction is dGMP + H2O = 2'-deoxyguanosine + phosphate. It carries out the reaction XMP + H2O = xanthosine + phosphate. It catalyses the reaction inosine + GMP = guanosine + IMP. The enzyme catalyses dGMP + inosine = 2'-deoxyguanosine + IMP. The catalysed reaction is dIMP + inosine = 2'-deoxyinosine + IMP. It carries out the reaction inosine + UMP = uridine + IMP. It catalyses the reaction inosine + CMP = cytidine + IMP. The enzyme catalyses inosine + AMP = IMP + adenosine. Allosterically activated by various compounds including ATP, 2,3-BPG/2,3-Bisphosphoglyceric acid and Ap4A/P1,P4-bis(5'-adenosyl) tetraphosphate. Binding of an allosteric activator is a prerequisiste to magnesium and substrate binding. Inhibited by inorganic phosphate. Functionally, broad specificity cytosolic 5'-nucleotidase that catalyzes the dephosphorylation of 6-hydroxypurine nucleoside 5'-monophosphates. In addition, possesses a phosphotransferase activity by which it can transfer a phosphate from a donor nucleoside monophosphate to an acceptor nucleoside, preferably inosine, deoxyinosine and guanosine. Has the highest activities for IMP and GMP followed by dIMP, dGMP and XMP. Could also catalyze the transfer of phosphates from pyrimidine monophosphates but with lower efficiency. Through these activities regulates the purine nucleoside/nucleotide pools within the cell. This is Cytosolic purine 5'-nucleotidase from Homo sapiens (Human).